Here is a 329-residue protein sequence, read N- to C-terminus: Prostaglandin reductase 1 (329 aa).

Thr-18 carries the post-translational modification Phosphothreonine. NADP(+)-binding positions include 152–155 (GAVG), Lys-178, Tyr-193, Asn-217, 239–245 (CGAISQY), 270–272 (FIV), and Asn-321. Lys-178 carries the post-translational modification N6-(2-hydroxyisobutyryl)lysine; alternate. An N6-acetyllysine; alternate modification is found at Lys-178.

This sequence belongs to the NADP-dependent oxidoreductase L4BD family. In terms of assembly, monomer or homodimer.

The protein localises to the cytoplasm. It catalyses the reaction 13,14-dihydro-15-oxo-prostaglandin E1 + NADP(+) = 15-oxoprostaglandin E1 + NADPH + H(+). The catalysed reaction is 13,14-dihydro-15-oxo-prostaglandin E2 + NADP(+) = 15-oxoprostaglandin E2 + NADPH + H(+). It carries out the reaction 13,14-dihydro-15-oxo-prostaglandin F1alpha + NADP(+) = 15-oxoprostaglandin F1alpha + NADPH + H(+). The enzyme catalyses 13,14-dihydro-15-oxo-PGF2alpha + NADP(+) = 15-oxoprostaglandin F2alpha + NADPH + H(+). It catalyses the reaction leukotriene B4 + NADP(+) = 12-oxo-leukotriene B4 + NADPH + H(+). The catalysed reaction is 20-hydroxy-leukotriene B4 + NADP(+) = 12-oxo-20-hydroxy-leukotriene B4 + NADPH + H(+). It carries out the reaction 6-trans-leukotriene B4 + NADP(+) = 12-oxo-(5S)-hydroxy-(6E,8E,10E,14Z)-eicosatetraenoate + NADPH + H(+). The enzyme catalyses (5S,12S)-dihydroxy-(6E,10E,12E,14Z)-eicosatetraenoate + NADP(+) = 12-oxo-(5S)-hydroxy-(6E,8E,10E,14Z)-eicosatetraenoate + NADPH + H(+). It catalyses the reaction an n-alkanal + NADP(+) = an alk-2-enal + NADPH + H(+). The catalysed reaction is hexanal + NADP(+) = (E)-hex-2-enal + NADPH + H(+). It carries out the reaction octanal + NADP(+) = (2E)-octenal + NADPH + H(+). The enzyme catalyses decanal + NADP(+) = (2E)-decenal + NADPH + H(+). It catalyses the reaction dodecanal + NADP(+) = (2E)-dodecenal + NADPH + H(+). The catalysed reaction is 4-hydroxynonanal + NADP(+) = (E)-4-hydroxynon-2-enal + NADPH + H(+). It carries out the reaction pentan-2-one + NADP(+) = (E)-pent-3-en-2-one + NADPH + H(+). The enzyme catalyses nonan-2-one + NADP(+) = (3E)-nonen-2-one + NADPH + H(+). NAD(P)H-dependent oxidoreductase involved in metabolic inactivation of pro- and anti-inflammatory eicosanoids: prostaglandins (PG), leukotrienes (LT) and lipoxins (LX). Catalyzes with high efficiency the reduction of the 13,14 double bond of 15-oxoPGs, including 15-oxo-PGE1, 15-oxo-PGE2, 15-oxo-PGF1-alpha and 15-oxo-PGF2-alpha. Catalyzes with lower efficiency the oxidation of the hydroxyl group at C12 of LTB4 and its derivatives, converting them into biologically less active 12-oxo-LTB4 metabolites. Reduces 15-oxo-LXA4 to 13,14 dihydro-15-oxo-LXA4, enhancing neutrophil recruitment at the inflammatory site. Plays a role in metabolic detoxification of alkenals and ketones. Reduces alpha,beta-unsaturated alkenals and ketones, particularly those with medium-chain length, showing highest affinity toward (2E)-decenal and (3E)-3-nonen-2-one. May inactivate 4-hydroxy-2-nonenal, a cytotoxic lipid constituent of oxidized low-density lipoprotein particles. This chain is Prostaglandin reductase 1 (Ptgr1), found in Mus musculus (Mouse).